The chain runs to 339 residues: Zinc transporter 3 (339 aa).

Positions 1–25 (MKTKNVKLLFFFFSVSLLLIAVVNA) are cleaved as a signal peptide. Topologically, residues 26–54 (AEGHSHGGPKCECSHEDDHENKAGARKYK) are extracellular. The helical transmembrane segment at 55–75 (IAAIPTVLIAGIIGVLFPLLG) threads the bilayer. The Cytoplasmic segment spans residues 76–86 (KVFPSLRPETC). Residues 87 to 107 (FFFVTKAFAAGVILATGFMHV) traverse the membrane as a helical segment. At 108–123 (LPEAYEMLNSPCLTSE) the chain is on the extracellular side. The chain crosses the membrane as a helical span at residues 124-144 (AWEFPFTGFIAMIAAILTLSV). The Cytoplasmic portion of the chain corresponds to 145–184 (DTFATSSFYKSHCKASKRVSDGETGESSVDSEKVQILRTR). The helical transmembrane segment at 185–205 (VIAQVLELGIIVHSVVIGISL) threads the bilayer. At 206–216 (GASQSPDAAKA) the chain is on the extracellular side. The helical transmembrane segment at 217–237 (LFIALMFHQCFEGLGLGGCIA) threads the bilayer. Residues 238–247 (QGKFKCLSVT) are Cytoplasmic-facing. The chain crosses the membrane as a helical span at residues 248 to 268 (IMSTFFAITTPIGIVVGMGIA). Topologically, residues 269-278 (NSYDESSPTA) are extracellular. The helical transmembrane segment at 279-299 (LIVQGVLNAASAGILIYMSLV) threads the bilayer. Topologically, residues 300-315 (DLLAADFTHPKMQSNT) are cytoplasmic. The helical transmembrane segment at 316-336 (GLQIMAHIALLLGAGLMSLLA) threads the bilayer. Residues 337-339 (KWA) are Extracellular-facing.

Belongs to the ZIP transporter (TC 2.A.5) family. As to expression, expressed predominantly in the roots of zinc-deficient plants.

The protein localises to the cell membrane. Mediates zinc uptake from the rhizosphere. May also transport other divalent cations. The chain is Zinc transporter 3 (ZIP3) from Arabidopsis thaliana (Mouse-ear cress).